The following is a 496-amino-acid chain: Solute carrier family 2, facilitated glucose transporter member 3 (496 aa).

Over 1–11 the chain is Cytoplasmic; the sequence is MADKKKITASL. The chain crosses the membrane as a helical span at residues 12-33; sequence IYAVSVAAIGSLQFGYNTGVIN. Over 34-65 the chain is Extracellular; sequence APEKIIQAFYNRTLSQRSGETISPELLTSLWS. An N-linked (GlcNAc...) asparagine glycan is attached at Asn44. The chain crosses the membrane as a helical span at residues 66-86; that stretch reads LSVAIFSVGGMIGSFSVSLFF. The Cytoplasmic portion of the chain corresponds to 87 to 91; it reads NRFGR. A helical membrane pass occupies residues 92–112; that stretch reads RNSMLLVNVLAFAGGALMALS. The Extracellular portion of the chain corresponds to 113 to 119; it reads KIAKAVE. Residues 120–143 form a helical membrane-spanning segment; it reads MLIIGRFIIGLFCGLCTGFVPMYI. At 144–154 the chain is on the cytoplasmic side; it reads SEVSPTSLRGA. A helical transmembrane segment spans residues 155–175; that stretch reads FGTLNQLGIVVGILVAQIFGL. Gln160 contacts D-glucose. At 176-184 the chain is on the extracellular side; the sequence is EGIMGTEAL. A helical transmembrane segment spans residues 185–205; sequence WPLLLGFTIVPAVLQCVALLF. Over 206–270 the chain is Cytoplasmic; it reads CPESPRFLLI…LFRSPNYRQP (65 aa). A helical transmembrane segment spans residues 271–291; that stretch reads IIISITLQLSQQLSGINAVFY. Residues 278-280 are important for selectivity against fructose; sequence QLS. Residues 281-282 and Asn287 contribute to the D-glucose site; that span reads QQ. Topologically, residues 292-305 are extracellular; sequence YSTGIFERAGITQP. The chain crosses the membrane as a helical span at residues 306-326; it reads VYATIGAGVVNTVFTVVSLFL. A D-glucose-binding site is contributed by Asn316. The Cytoplasmic portion of the chain corresponds to 327–332; it reads VERAGR. Residues 333–353 form a helical membrane-spanning segment; it reads RTLHLVGLGGMAVCAAVMTIA. Over 354–362 the chain is Extracellular; that stretch reads LALKEKWIR. A helical membrane pass occupies residues 363-388; it reads YISIVATFGFVALFEIGPGPIPWFIV. Glu377 and Trp385 together coordinate D-glucose. Over 389–398 the chain is Cytoplasmic; the sequence is AELFSQGPRP. The helical transmembrane segment at 399–419 threads the bilayer; sequence AAMAVAGCSNWTSNFLVGMLF. The Extracellular segment spans residues 420-428; the sequence is PYAEKLCGP. The helical transmembrane segment at 429–449 threads the bilayer; that stretch reads YVFLIFLVFLLIFFIFTYFKV. Topologically, residues 450-496 are cytoplasmic; it reads PETKGRTFEDISRGFEEQVETSSPSSPPIEKNPMVEMNSIEPDKEVA. A disordered region spans residues 464–496; the sequence is FEEQVETSSPSSPPIEKNPMVEMNSIEPDKEVA.

Belongs to the major facilitator superfamily. Sugar transporter (TC 2.A.1.1) family. Glucose transporter subfamily.

It localises to the cell membrane. It is found in the perikaryon. The protein localises to the cell projection. The catalysed reaction is D-glucose(out) = D-glucose(in). The enzyme catalyses D-galactose(in) = D-galactose(out). Its activity is regulated as follows. Deoxyglucose transport is inhibited by D-glucose, D-galactose and maltose. Galactose transport is inhibited by D-glucose and maltose. In terms of biological role, facilitative glucose transporter. Can also mediate the uptake of various other monosaccharides across the cell membrane. Mediates the uptake of glucose, 2-deoxyglucose, galactose, mannose, xylose and fucose, and probably also dehydroascorbate. Does not mediate fructose transport. Required for mesendoderm differentiation. The polypeptide is Solute carrier family 2, facilitated glucose transporter member 3 (Gallus gallus (Chicken)).